Here is a 498-residue protein sequence, read N- to C-terminus: ATP synthase subunit beta, chloroplastic (498 aa).

Position 172–179 (172–179 (GGAGVGKT)) interacts with ATP.

Belongs to the ATPase alpha/beta chains family. In terms of assembly, F-type ATPases have 2 components, CF(1) - the catalytic core - and CF(0) - the membrane proton channel. CF(1) has five subunits: alpha(3), beta(3), gamma(1), delta(1), epsilon(1). CF(0) has four main subunits: a(1), b(1), b'(1) and c(9-12).

It is found in the plastid. The protein localises to the chloroplast thylakoid membrane. The catalysed reaction is ATP + H2O + 4 H(+)(in) = ADP + phosphate + 5 H(+)(out). In terms of biological role, produces ATP from ADP in the presence of a proton gradient across the membrane. The catalytic sites are hosted primarily by the beta subunits. In Cinnamomum camphora (Camphor tree), this protein is ATP synthase subunit beta, chloroplastic.